A 909-amino-acid chain; its full sequence is GTPase activating protein homolog 4 (909 aa).

In terms of domain architecture, F-BAR spans 1 to 257 (MASLIGSAKL…PTPDFQFESC (257 aa)). The region spanning 322 to 513 (IPIEEIMFKQ…LIIEGYLKLS (192 aa)) is the Rho-GAP domain. Residues 529–909 (IPSFSNNNNN…QRVPPPPSQS (381 aa)) form a disordered region. Low complexity-rich tracts occupy residues 533-562 (SNNN…ITTN) and 571-602 (SSTT…TPQQ). The segment covering 609–625 (SYQPPQPPPTMAPPPLF) has biased composition (pro residues). Residues 651–674 (QYTQSSSNLPPIQLGVTNSPSKPQ) are compositionally biased toward polar residues. The stretch at 672–809 (KPQLSDKQKE…QQLQQQSNGS (138 aa)) forms a coiled coil. The span at 675 to 716 (LSDKQKEKEKEKEKEKEKEKEREKEKEKEKEKEKEKEKEKEK) shows a compositional bias: basic and acidic residues. The segment covering 723 to 741 (SSSTSPNSSSLSISNFLSS) has biased composition (low complexity). Residues 742-765 (NKDKDKEKDKEKEKEKEKEKDKEI) show a composition bias toward basic and acidic residues. Polar residues predominate over residues 767-785 (ATNSTPEKPVSNRMSLIFS). Composition is skewed to low complexity over residues 786-828 (QQLQ…MSPS) and 843-892 (SGTS…ELKS).

It is found in the cytoplasm. The protein localises to the contractile vacuole. Its function is as follows. Rho GTPase-activating protein involved in the signal transduction pathway. The protein is GTPase activating protein homolog 4 (mgp4) of Dictyostelium discoideum (Social amoeba).